The sequence spans 198 residues: Proteasome subunit beta type-4 (198 aa).

Residue M1 is modified to N-acetylmethionine. S76 carries the post-translational modification Phosphoserine.

Belongs to the peptidase T1B family. In terms of assembly, the 26S proteasome consists of a 20S proteasome core and two 19S regulatory subunits. The 20S proteasome core is composed of 28 subunits that are arranged in four stacked rings, resulting in a barrel-shaped structure. The two end rings are each formed by seven alpha subunits, and the two central rings are each formed by seven beta subunits. The catalytic chamber with the active sites is on the inside of the barrel.

It localises to the cytoplasm. It is found in the nucleus. Non-catalytic component of the proteasome which degrades poly-ubiquitinated proteins in the cytoplasm and in the nucleus. It is essential for the regulated turnover of proteins and for the removal of misfolded proteins. The proteasome is a multicatalytic proteinase complex that is characterized by its ability to cleave peptides with Arg, Phe, Tyr, Leu, and Glu adjacent to the leaving group at neutral or slightly basic pH. It has an ATP-dependent proteolytic activity. This subunit has a chymotrypsin-like activity. The chain is Proteasome subunit beta type-4 (PRE1) from Saccharomyces cerevisiae (strain ATCC 204508 / S288c) (Baker's yeast).